A 269-amino-acid chain; its full sequence is Phosphate import ATP-binding protein PstB 2 (269 aa).

Residues 23-264 (LHTEDLHVFY…PKIQATEDYV (242 aa)) form the ABC transporter domain. 55-62 (GPSGCGKS) provides a ligand contact to ATP.

The protein belongs to the ABC transporter superfamily. Phosphate importer (TC 3.A.1.7) family. The complex is composed of two ATP-binding proteins (PstB), two transmembrane proteins (PstC and PstA) and a solute-binding protein (PstS).

It localises to the cell membrane. The enzyme catalyses phosphate(out) + ATP + H2O = ADP + 2 phosphate(in) + H(+). Its function is as follows. Part of the ABC transporter complex PstSACB involved in phosphate import. Responsible for energy coupling to the transport system. This is Phosphate import ATP-binding protein PstB 2 from Enterococcus faecalis (strain ATCC 700802 / V583).